The chain runs to 174 residues: FAD synthase (174 aa).

ATP is bound by residues 34-35 (TF), 39-42 (HPGH), Asp119, and Tyr147.

This sequence belongs to the archaeal FAD synthase family. As to quaternary structure, homodimer. A divalent metal cation serves as cofactor.

It catalyses the reaction FMN + ATP + H(+) = FAD + diphosphate. Its pathway is cofactor biosynthesis; FAD biosynthesis; FAD from FMN: step 1/1. In terms of biological role, catalyzes the transfer of the AMP portion of ATP to flavin mononucleotide (FMN) to produce flavin adenine dinucleotide (FAD) coenzyme. This Methanococcus voltae (strain ATCC BAA-1334 / A3) protein is FAD synthase.